The sequence spans 275 residues: MPELPEVETVRRGLAALVEGKIVTNVVVRYSKMVSPKAEIFAEELEGKKILNVRRRGKYLLIDFSGDYTMVSHLRMEGKYSVVDRREEYGKHDHVIFELDDGKDLRYNDTRKFGRMNLVPTGEELQVGGLKTIGPEPTPETLTLEYLTHQLRNRKRGMKSFLLDQSMIAGLGNIYADEVLWLSKIHPQQISNTLTDEEIAILRESIFEELQLAIEAKGTTVFSYLNADGHAGSFQNQLHVYHRQGLPCQRCGTPIERIKVAQRGTHFCPHCQVLR.

The active-site Schiff-base intermediate with DNA is the Pro2. Glu3 acts as the Proton donor in catalysis. The Proton donor; for beta-elimination activity role is filled by Lys58. DNA is bound by residues His92, Arg111, and Arg154. The FPG-type zinc-finger motif lies at 239–273; sequence HVYHRQGLPCQRCGTPIERIKVAQRGTHFCPHCQV. Arg263 functions as the Proton donor; for delta-elimination activity in the catalytic mechanism.

This sequence belongs to the FPG family. As to quaternary structure, monomer. Zn(2+) serves as cofactor.

It catalyses the reaction Hydrolysis of DNA containing ring-opened 7-methylguanine residues, releasing 2,6-diamino-4-hydroxy-5-(N-methyl)formamidopyrimidine.. The catalysed reaction is 2'-deoxyribonucleotide-(2'-deoxyribose 5'-phosphate)-2'-deoxyribonucleotide-DNA = a 3'-end 2'-deoxyribonucleotide-(2,3-dehydro-2,3-deoxyribose 5'-phosphate)-DNA + a 5'-end 5'-phospho-2'-deoxyribonucleoside-DNA + H(+). In terms of biological role, involved in base excision repair of DNA damaged by oxidation or by mutagenic agents. Acts as a DNA glycosylase that recognizes and removes damaged bases. Has a preference for oxidized purines, such as 7,8-dihydro-8-oxoguanine (8-oxoG). Has AP (apurinic/apyrimidinic) lyase activity and introduces nicks in the DNA strand. Cleaves the DNA backbone by beta-delta elimination to generate a single-strand break at the site of the removed base with both 3'- and 5'-phosphates. The protein is Formamidopyrimidine-DNA glycosylase of Pediococcus pentosaceus (strain ATCC 25745 / CCUG 21536 / LMG 10740 / 183-1w).